A 193-amino-acid polypeptide reads, in one-letter code: Glycerol-3-phosphate acyltransferase (193 aa).

5 consecutive transmembrane segments (helical) span residues 4-24 (LALI…AVLI), 56-76 (GLVL…GYFL), 80-100 (PLLL…PLFF), 116-136 (APIG…IVLI), and 152-174 (PLFT…CLIV).

It belongs to the PlsY family. As to quaternary structure, probably interacts with PlsX.

Its subcellular location is the cell inner membrane. The catalysed reaction is an acyl phosphate + sn-glycerol 3-phosphate = a 1-acyl-sn-glycero-3-phosphate + phosphate. It participates in lipid metabolism; phospholipid metabolism. Functionally, catalyzes the transfer of an acyl group from acyl-phosphate (acyl-PO(4)) to glycerol-3-phosphate (G3P) to form lysophosphatidic acid (LPA). This enzyme utilizes acyl-phosphate as fatty acyl donor, but not acyl-CoA or acyl-ACP. The chain is Glycerol-3-phosphate acyltransferase from Aliivibrio salmonicida (strain LFI1238) (Vibrio salmonicida (strain LFI1238)).